A 72-amino-acid chain; its full sequence is UPF0270 protein YheU (72 aa).

It belongs to the UPF0270 family.

This Salmonella arizonae (strain ATCC BAA-731 / CDC346-86 / RSK2980) protein is UPF0270 protein YheU.